Here is a 312-residue protein sequence, read N- to C-terminus: Prephenate dehydratase (312 aa).

The Prephenate dehydratase domain occupies 3-194; that stretch reads GIAYLGPEGT…ARTRFVLVGR (192 aa). The ACT domain maps to 208–285; it reads SVVLQLDNVP…ADVRYLGSWP (78 aa). The segment at 291–312 is disordered; it reads GAAPPPMDESASWLEGLREGRP.

In terms of assembly, homodimer.

The enzyme catalyses prephenate + H(+) = 3-phenylpyruvate + CO2 + H2O. It functions in the pathway amino-acid biosynthesis; L-phenylalanine biosynthesis; phenylpyruvate from prephenate: step 1/1. The polypeptide is Prephenate dehydratase (pheA) (Mycolicibacterium vanbaalenii (strain DSM 7251 / JCM 13017 / BCRC 16820 / KCTC 9966 / NRRL B-24157 / PYR-1) (Mycobacterium vanbaalenii)).